The following is an 80-amino-acid chain: Tail fiber assembly helper protein (80 aa).

Homotrimer. Homohexamer.

Chaperone essential for folding and oligomerization of both long and short tail fibers. Required for the assembly of gp34, gp36 and gp37 (components of the long tail fiber) and p12 (the subunit of the short tail fiber). Together with gp38, participates in the formation of the distal part of the long fibers. This Escherichia coli (Bacteriophage T4) protein is Tail fiber assembly helper protein (57).